Consider the following 228-residue polypeptide: 5'-methylthioadenosine/S-adenosylhomocysteine nucleosidase (228 aa).

The active-site Proton acceptor is the E11. Residues G77, I151, and M172–E173 each bind substrate. D196 (proton donor) is an active-site residue.

The protein belongs to the PNP/UDP phosphorylase family. MtnN subfamily.

It catalyses the reaction S-adenosyl-L-homocysteine + H2O = S-(5-deoxy-D-ribos-5-yl)-L-homocysteine + adenine. The catalysed reaction is S-methyl-5'-thioadenosine + H2O = 5-(methylsulfanyl)-D-ribose + adenine. It carries out the reaction 5'-deoxyadenosine + H2O = 5-deoxy-D-ribose + adenine. It participates in amino-acid biosynthesis; L-methionine biosynthesis via salvage pathway; S-methyl-5-thio-alpha-D-ribose 1-phosphate from S-methyl-5'-thioadenosine (hydrolase route): step 1/2. Catalyzes the irreversible cleavage of the glycosidic bond in both 5'-methylthioadenosine (MTA) and S-adenosylhomocysteine (SAH/AdoHcy) to adenine and the corresponding thioribose, 5'-methylthioribose and S-ribosylhomocysteine, respectively. Also cleaves 5'-deoxyadenosine, a toxic by-product of radical S-adenosylmethionine (SAM) enzymes, into 5-deoxyribose and adenine. The polypeptide is 5'-methylthioadenosine/S-adenosylhomocysteine nucleosidase (Staphylococcus carnosus (strain TM300)).